The following is a 481-amino-acid chain: Aspartyl/glutamyl-tRNA(Asn/Gln) amidotransferase subunit B (481 aa).

This sequence belongs to the GatB/GatE family. GatB subfamily. As to quaternary structure, heterotrimer of A, B and C subunits.

The catalysed reaction is L-glutamyl-tRNA(Gln) + L-glutamine + ATP + H2O = L-glutaminyl-tRNA(Gln) + L-glutamate + ADP + phosphate + H(+). It catalyses the reaction L-aspartyl-tRNA(Asn) + L-glutamine + ATP + H2O = L-asparaginyl-tRNA(Asn) + L-glutamate + ADP + phosphate + 2 H(+). Its function is as follows. Allows the formation of correctly charged Asn-tRNA(Asn) or Gln-tRNA(Gln) through the transamidation of misacylated Asp-tRNA(Asn) or Glu-tRNA(Gln) in organisms which lack either or both of asparaginyl-tRNA or glutaminyl-tRNA synthetases. The reaction takes place in the presence of glutamine and ATP through an activated phospho-Asp-tRNA(Asn) or phospho-Glu-tRNA(Gln). The polypeptide is Aspartyl/glutamyl-tRNA(Asn/Gln) amidotransferase subunit B (Prosthecochloris aestuarii (strain DSM 271 / SK 413)).